Reading from the N-terminus, the 219-residue chain is uncharacterized protein (219 aa).

This is an uncharacterized protein from Escherichia coli (Bacteriophage T4).